We begin with the raw amino-acid sequence, 227 residues long: Aspartyl protease inhibitor (227 aa).

Positions 1 to 15 (MKLVVLCVLCGIALA) are cleaved as a signal peptide. Positions 88–109 (SLKSRMAGKKEKAVTPKEEDLP) are enriched in basic and acidic residues. Positions 88–116 (SLKSRMAGKKEKAVTPKEEDLPKAPQKPS) are disordered. C131 and C223 are disulfide-bonded.

This sequence belongs to the protease inhibitor I33 family.

It localises to the secreted. Aspartyl protease inhibitor. The protein is Aspartyl protease inhibitor (API) of Ostertagia ostertagi (Brown stomach worm).